The chain runs to 434 residues: Methylenetetrahydrofolate--tRNA-(uracil-5-)-methyltransferase TrmFO (434 aa).

Residue Gly9 to Gly14 participates in FAD binding.

It belongs to the MnmG family. TrmFO subfamily. FAD is required as a cofactor.

It is found in the cytoplasm. It carries out the reaction uridine(54) in tRNA + (6R)-5,10-methylene-5,6,7,8-tetrahydrofolate + NADH + H(+) = 5-methyluridine(54) in tRNA + (6S)-5,6,7,8-tetrahydrofolate + NAD(+). The enzyme catalyses uridine(54) in tRNA + (6R)-5,10-methylene-5,6,7,8-tetrahydrofolate + NADPH + H(+) = 5-methyluridine(54) in tRNA + (6S)-5,6,7,8-tetrahydrofolate + NADP(+). Its function is as follows. Catalyzes the folate-dependent formation of 5-methyl-uridine at position 54 (M-5-U54) in all tRNAs. The chain is Methylenetetrahydrofolate--tRNA-(uracil-5-)-methyltransferase TrmFO from Listeria monocytogenes serovar 1/2a (strain ATCC BAA-679 / EGD-e).